Reading from the N-terminus, the 116-residue chain is Small ribosomal subunit protein bS16 (116 aa).

This sequence belongs to the bacterial ribosomal protein bS16 family.

The polypeptide is Small ribosomal subunit protein bS16 (Chlamydia trachomatis serovar A (strain ATCC VR-571B / DSM 19440 / HAR-13)).